We begin with the raw amino-acid sequence, 160 residues long: Cyanate hydratase (160 aa).

Active-site residues include arginine 100, glutamate 103, and serine 126.

Belongs to the cyanase family.

The enzyme catalyses cyanate + hydrogencarbonate + 3 H(+) = NH4(+) + 2 CO2. Functionally, catalyzes the reaction of cyanate with bicarbonate to produce ammonia and carbon dioxide. This chain is Cyanate hydratase, found in Emericella nidulans (strain FGSC A4 / ATCC 38163 / CBS 112.46 / NRRL 194 / M139) (Aspergillus nidulans).